The chain runs to 196 residues: Lipoprotein signal peptidase (196 aa).

3 helical membrane-spanning segments follow: residues serine 17–leucine 37, serine 73–isoleucine 93, and asparagine 96–isoleucine 116. Catalysis depends on residues aspartate 126 and aspartate 144. The helical transmembrane segment at tyrosine 135–isoleucine 155 threads the bilayer.

The protein belongs to the peptidase A8 family.

It localises to the cell inner membrane. The catalysed reaction is Release of signal peptides from bacterial membrane prolipoproteins. Hydrolyzes -Xaa-Yaa-Zaa-|-(S,diacylglyceryl)Cys-, in which Xaa is hydrophobic (preferably Leu), and Yaa (Ala or Ser) and Zaa (Gly or Ala) have small, neutral side chains.. Its pathway is protein modification; lipoprotein biosynthesis (signal peptide cleavage). This protein specifically catalyzes the removal of signal peptides from prolipoproteins. The polypeptide is Lipoprotein signal peptidase (Rickettsia akari (strain Hartford)).